We begin with the raw amino-acid sequence, 426 residues long: Serine--tRNA ligase (426 aa).

231-233 lines the L-serine pocket; sequence TAE. An ATP-binding site is contributed by 262 to 264; that stretch reads RSE. Glutamate 285 lines the L-serine pocket. An ATP-binding site is contributed by 349–352; it reads EISS. Serine 385 is a binding site for L-serine.

The protein belongs to the class-II aminoacyl-tRNA synthetase family. Type-1 seryl-tRNA synthetase subfamily. Homodimer. The tRNA molecule binds across the dimer.

The protein resides in the cytoplasm. The enzyme catalyses tRNA(Ser) + L-serine + ATP = L-seryl-tRNA(Ser) + AMP + diphosphate + H(+). It catalyses the reaction tRNA(Sec) + L-serine + ATP = L-seryl-tRNA(Sec) + AMP + diphosphate + H(+). It participates in aminoacyl-tRNA biosynthesis; selenocysteinyl-tRNA(Sec) biosynthesis; L-seryl-tRNA(Sec) from L-serine and tRNA(Sec): step 1/1. Catalyzes the attachment of serine to tRNA(Ser). Is also able to aminoacylate tRNA(Sec) with serine, to form the misacylated tRNA L-seryl-tRNA(Sec), which will be further converted into selenocysteinyl-tRNA(Sec). The polypeptide is Serine--tRNA ligase (Lysinibacillus sphaericus (strain C3-41)).